Consider the following 246-residue polypeptide: V-type proton ATPase subunit D (246 aa).

The protein belongs to the V-ATPase D subunit family. As to quaternary structure, V-ATPase is a heteromultimeric enzyme made up of two complexes: the ATP-hydrolytic V1 complex and the proton translocation V0 complex. The V1 complex consists of three catalytic AB heterodimers that form a heterohexamer, three peripheral stalks each consisting of EG heterodimers, one central rotor including subunits D and F, and the regulatory subunits C and H. The proton translocation complex V0 consists of the proton transport subunit a, a ring of proteolipid subunits c9c'', rotary subunit d, subunits e and f, and the accessory subunits VhaAC45 and ATP6AP2.

In terms of biological role, subunit of the V1 complex of vacuolar(H+)-ATPase (V-ATPase), a multisubunit enzyme composed of a peripheral complex (V1) that hydrolyzes ATP and a membrane integral complex (V0) that translocates protons. V-ATPase is responsible for acidifying and maintaining the pH of intracellular compartments and in some cell types, is targeted to the plasma membrane, where it is responsible for acidifying the extracellular environment. The chain is V-type proton ATPase subunit D from Manduca sexta (Tobacco hawkmoth).